Reading from the N-terminus, the 561-residue chain is AT-rich interactive domain-containing protein 3B (561 aa).

Residue Met1 is modified to N-acetylmethionine. The segment covering 1–17 (MEPLQQQQQQQQQQQKQ) has biased composition (low complexity). Disordered stretches follow at residues 1 to 36 (MEPLQQQQQQQQQQQKQPHLAPLQMDAREKQGQQMR), 53 to 122 (LSAT…SKYF), and 136 to 179 (PMSN…WNLD). The residue at position 89 (Ser89) is a Phosphoserine. A compositionally biased stretch (acidic residues) spans 90 to 109 (EPEEEDGGLEDEDGDDEVAE). A compositionally biased stretch (basic and acidic residues) spans 152-162 (QAKEDHTKDAS). Polar residues predominate over residues 164–178 (ASPSVSTAGQPNWNL). A Phosphoserine modification is found at Ser165. Residues 203–365 (SRDFAKLYEL…SPPKIRFPIL (163 aa)) form an interaction with RB1 region. An ARID domain is found at 215-307 (DPERKEFLDD…YLYAYECEKK (93 aa)). Ser311 carries the post-translational modification Phosphoserine. Asymmetric dimethylarginine is present on Arg361. Residues 370–397 (SSGTNTSSPRISPATTLRKGDGAPVTTV) form a disordered region. An REKLES domain is found at 419–517 (AALEQLRERL…GVLFAQKPVV (99 aa)). An interaction with ARID3A region spans residues 490 to 513 (SSIGSINMSVDIDGTTYAGVLFAQ). Over residues 523-552 (SAPQSLGSSASSSSSSHCSPSPTSSRGTPS) the composition is skewed to low complexity. A disordered region spans residues 523-561 (SAPQSLGSSASSSSSSHCSPSPTSSRGTPSAEPSTSWSL).

In terms of assembly, heterodimer with ARID3A. Interacts with unphosphorylated RB1. In terms of tissue distribution, expressed in placenta, testis and leukocytes. Expressed in neuroblastoma. Present in K-562 erythrocytic leukemia cell line (at protein level).

It is found in the nucleus. Functionally, transcription factor which may be involved in neuroblastoma growth and malignant transformation. Favors nuclear targeting of ARID3A. The protein is AT-rich interactive domain-containing protein 3B (ARID3B) of Homo sapiens (Human).